We begin with the raw amino-acid sequence, 210 residues long: Small ribosomal subunit protein uS3 (210 aa).

The 70-residue stretch at I17–K86 folds into the KH type-2 domain.

It belongs to the universal ribosomal protein uS3 family. Part of the 30S ribosomal subunit.

Binds the lower part of the 30S subunit head. The chain is Small ribosomal subunit protein uS3 from Pyrococcus abyssi (strain GE5 / Orsay).